Consider the following 307-residue polypeptide: Taste receptor type 2 member 10 (307 aa).

Over 1–6 (MLRVVE) the chain is Extracellular. The chain crosses the membrane as a helical span at residues 7 to 27 (GIFIFVVVSESVFGVLGNGFI). Residues 28–42 (GLVNCIDCAKNKLST) are Cytoplasmic-facing. Residues 43-63 (IGFILTGLAISRIFLIWIIIT) traverse the membrane as a helical segment. Residues 64–100 (DGFIQIFSPNIYASGNLIEYISYFWVIGNQSSMWFAT) lie on the Extracellular side of the membrane. A glycan (N-linked (GlcNAc...) asparagine) is linked at Asn92. The helical transmembrane segment at 101–121 (SLSIFYFLKIANFSNYIFLWL) threads the bilayer. At 122–126 (KSRTN) the chain is on the cytoplasmic side. The chain crosses the membrane as a helical span at residues 127–147 (MVLPFMIVFLLISSLLNFAYI). The Extracellular segment spans residues 148–179 (AKILNDYKTKNDTVWDLNMYKSEYFIKQILLN). Residue Asn158 is glycosylated (N-linked (GlcNAc...) asparagine). A helical membrane pass occupies residues 180 to 200 (LGVIFFFTLSLITCIFLIISL). The Cytoplasmic portion of the chain corresponds to 201 to 227 (WRHNRQMQSNVTGLRDSNTEAHVKAMK). A helical transmembrane segment spans residues 228 to 248 (VLISFIILFILYFIGMAIEIS). Topologically, residues 249 to 257 (CFTVRENKL) are extracellular. A helical membrane pass occupies residues 258–278 (LLMFGMTTTAIYPWGHSFILI). At 279–307 (LGNSKLKQASLRVLQQLKCCEKRKNLRVT) the chain is on the cytoplasmic side.

Belongs to the G-protein coupled receptor T2R family. As to expression, expressed in subsets of taste receptor cells of the tongue and palate epithelium and exclusively in gustducin-positive cells.

The protein resides in the membrane. Its function is as follows. Gustducin-coupled strychnine receptor implicated in the perception of bitter compounds in the oral cavity and the gastrointestinal tract. Signals through PLCB2 and the calcium-regulated cation channel TRPM5. This is Taste receptor type 2 member 10 (TAS2R10) from Homo sapiens (Human).